Consider the following 588-residue polypeptide: Lamin-B1 (588 aa).

A compositionally biased stretch (polar residues) spans 1-12 (MATATPVQQQRA). The interval 1 to 34 (MATATPVQQQRAGSRASAPATPLSPTRLSRLQEK) is disordered. Ala2 carries the post-translational modification N-acetylalanine. Positions 2–35 (ATATPVQQQRAGSRASAPATPLSPTRLSRLQEKE) are head. 2 positions are modified to phosphothreonine: Thr3 and Thr5. Position 15 is an omega-N-methylarginine (Arg15). Ser17 is subject to Phosphoserine. Thr21 carries the post-translational modification Phosphothreonine. The residue at position 24 (Ser24) is a Phosphoserine. Thr26 is modified (phosphothreonine). Phosphoserine is present on Ser29. Residues 33 to 389 (EKEELRELND…KLLEGEEERL (357 aa)) enclose the IF rod domain. Residues 36–70 (ELRELNDRLAVYIDKVRSLETENSALQLQVTEREE) are coil 1A. Residues 71–82 (VRGRELTGLKAL) form a linker 1 region. Positions 83-216 (YETELADARR…EFRKNMYEEE (134 aa)) are coil 1B. A Glycyl lysine isopeptide (Lys-Gly) (interchain with G-Cter in SUMO2) cross-link involves residue Lys103. Lys112 carries the post-translational modification N6-acetyllysine. Residue Lys124 forms a Glycyl lysine isopeptide (Lys-Gly) (interchain with G-Cter in SUMO2) linkage. Position 127 is a phosphoserine (Ser127). Lys146 participates in a covalent cross-link: Glycyl lysine isopeptide (Lys-Gly) (interchain with G-Cter in SUMO2). Residue Lys158 is modified to N6-acetyllysine; alternate. Residue Lys158 forms a Glycyl lysine isopeptide (Lys-Gly) (interchain with G-Cter in SUMO2); alternate linkage. Phosphoserine is present on Ser159. Residue Lys182 forms a Glycyl lysine isopeptide (Lys-Gly) (interchain with G-Cter in SUMO2) linkage. Phosphoserine occurs at positions 201 and 233. The segment at 217-244 (INETRRKHETRLVEVDSGRQIEYEYKLA) is linker 2. Residues Lys242 and Lys262 each participate in a glycyl lysine isopeptide (Lys-Gly) (interchain with G-Cter in SUMO2) cross-link. A coil 2 region spans residues 245 to 387 (QALHEMREQH…YRKLLEGEEE (143 aa)). Residue Lys272 is modified to N6-acetyllysine; alternate. Lys272 is covalently cross-linked (Glycyl lysine isopeptide (Lys-Gly) (interchain with G-Cter in SUMO2); alternate). Residues Ser279 and Ser303 each carry the phosphoserine modification. Lys313 is covalently cross-linked (Glycyl lysine isopeptide (Lys-Gly) (interchain with G-Cter in SUMO2)). Lys331 bears the N6-acetyllysine; alternate mark. Residue Lys331 forms a Glycyl lysine isopeptide (Lys-Gly) (interchain with G-Cter in SUMO2); alternate linkage. Ser376 and Ser394 each carry phosphoserine. The tract at residues 388-588 (RLKLSPSPSS…RASNKSCAIM (201 aa)) is tail. A compositionally biased stretch (low complexity) spans 391 to 410 (LSPSPSSRVTVSRASSSRSV). The tract at residues 391–433 (LSPSPSSRVTVSRASSSRSVRTTRGKRKRVDVEESEASSSVSI) is disordered. Thr400 carries an O-linked (GlcNAc) threonine glycan. Arg414 carries the omega-N-methylarginine modification. Residues 416–421 (KRKRVD) carry the Nuclear localization signal motif. Residues 431–547 (VSISHSASAT…EEVAQRSTVF (117 aa)) form the LTD domain. Lys484 is modified (N6-acetyllysine). Residue Lys533 forms a Glycyl lysine isopeptide (Lys-Gly) (interchain with G-Cter in SUMO2) linkage. A Phosphoserine modification is found at Ser535. Lys548 participates in a covalent cross-link: Glycyl lysine isopeptide (Lys-Gly) (interchain with G-Cter in SUMO2). The residue at position 585 (Cys585) is a Cysteine methyl ester. Cys585 is lipidated: S-farnesyl cysteine. Residues 586–588 (AIM) constitute a propeptide, removed in mature form.

It belongs to the intermediate filament family. Homodimer. Lamin dimers then assemble into dimeric head-to-tail polymers. Ultimately, two head-to-tail polymers assemble laterally into a protofilament with a uniformly shaped rod of 3.5 nm in diameter. Interacts with SPAG4 and SEPT12. In terms of processing, B-type lamins undergo a series of modifications, such as farnesylation and phosphorylation. Increased phosphorylation of the lamins occurs before envelope disintegration and probably plays a role in regulating lamin associations. Post-translationally, phosphorylation plays a key role in lamin organization, subcellular localization and nuclear envelope disintegration. Phosphorylation by CDK1 at Ser-24 and Ser-394 at the onset of mitosis drives lamin disassembly and nuclear envelope breakdown.

It is found in the nucleus lamina. Its function is as follows. Lamins are intermediate filament proteins that assemble into a filamentous meshwork, and which constitute the major components of the nuclear lamina, a fibrous layer on the nucleoplasmic side of the inner nuclear membrane. Lamins provide a framework for the nuclear envelope, bridging the nuclear envelope and chromatin, thereby playing an important role in nuclear assembly, chromatin organization, nuclear membrane and telomere dynamics. The structural integrity of the lamina is strictly controlled by the cell cycle, as seen by the disintegration and formation of the nuclear envelope in prophase and telophase, respectively. This Mus musculus (Mouse) protein is Lamin-B1 (Lmnb1).